A 194-amino-acid polypeptide reads, in one-letter code: MRLTDFEIEQALDAGTILIEPRPSNDAISGVSVDVRLGNQFRVFQDHTAPFIDLSGPSAEVQAALDRVMSDKIDIKDGNAFFLHPGELALAVTLESVTLPADIVGWLDGRSSLARLGLMVHVTAHRIDPGWQGKIVLEFYNSGKLPLALRPGMTIGALNFERLSGPVSRPYNKRKNAKYKDQQEAVASRISQDS.

Residues 110-115 (RSSLAR), Asp-128, 136-138 (VLE), Tyr-171, Lys-178, and Gln-182 each bind dCTP. The active-site Proton donor/acceptor is Glu-138. The disordered stretch occupies residues 171-194 (YNKRKNAKYKDQQEAVASRISQDS).

The protein belongs to the dCTP deaminase family. Homotrimer.

The enzyme catalyses dCTP + H2O + H(+) = dUTP + NH4(+). It functions in the pathway pyrimidine metabolism; dUMP biosynthesis; dUMP from dCTP (dUTP route): step 1/2. In terms of biological role, catalyzes the deamination of dCTP to dUTP. The protein is dCTP deaminase of Shewanella amazonensis (strain ATCC BAA-1098 / SB2B).